A 244-amino-acid polypeptide reads, in one-letter code: Thiol S-methyltransferase TMT1B (244 aa).

Residues 1-23 (MDILVPLLQLLVLLLTLPLHLMA) form the signal peptide.

The protein belongs to the methyltransferase superfamily. In terms of tissue distribution, expressed in the liver.

Its subcellular location is the endoplasmic reticulum membrane. The protein resides in the lipid droplet. It is found in the microsome. It localises to the cytoplasm. The protein localises to the cytosol. The catalysed reaction is a thiol + S-adenosyl-L-methionine = a methyl thioether + S-adenosyl-L-homocysteine + H(+). Thiol S-methyltransferase that catalyzes the transfer of a methyl group from S-adenosyl-L-methionine to alkyl and phenolic thiol-containing acceptor substrates. Together with TMT1B accounts for most of S-thiol methylation activity in the endoplasmic reticulum of hepatocytes. Selectively methylates S-centered nucleophiles from metabolites such as hydrogen sulfide and dithiothreitol. This is Thiol S-methyltransferase TMT1B from Homo sapiens (Human).